The chain runs to 208 residues: ATP-dependent Clp protease proteolytic subunit 1 (208 aa).

Catalysis depends on Ser108, which acts as the Nucleophile. His133 is a catalytic residue.

This sequence belongs to the peptidase S14 family. Fourteen ClpP subunits assemble into 2 heptameric rings which stack back to back to give a disk-like structure with a central cavity, resembling the structure of eukaryotic proteasomes.

It localises to the cytoplasm. The catalysed reaction is Hydrolysis of proteins to small peptides in the presence of ATP and magnesium. alpha-casein is the usual test substrate. In the absence of ATP, only oligopeptides shorter than five residues are hydrolyzed (such as succinyl-Leu-Tyr-|-NHMec, and Leu-Tyr-Leu-|-Tyr-Trp, in which cleavage of the -Tyr-|-Leu- and -Tyr-|-Trp bonds also occurs).. Its function is as follows. Cleaves peptides in various proteins in a process that requires ATP hydrolysis. Has a chymotrypsin-like activity. Plays a major role in the degradation of misfolded proteins. In Corynebacterium efficiens (strain DSM 44549 / YS-314 / AJ 12310 / JCM 11189 / NBRC 100395), this protein is ATP-dependent Clp protease proteolytic subunit 1.